The following is a 244-amino-acid chain: Uridylate kinase (244 aa).

16–19 (KLSG) is a binding site for ATP. G58 contacts UMP. ATP contacts are provided by G59 and R63. Residues D78 and 139 to 146 (VGAPYFTT) each bind UMP. ATP-binding residues include T166, Y172, and D175.

This sequence belongs to the UMP kinase family. Homohexamer.

The protein resides in the cytoplasm. It catalyses the reaction UMP + ATP = UDP + ADP. It functions in the pathway pyrimidine metabolism; CTP biosynthesis via de novo pathway; UDP from UMP (UMPK route): step 1/1. With respect to regulation, inhibited by UTP. Its function is as follows. Catalyzes the reversible phosphorylation of UMP to UDP. The protein is Uridylate kinase of Novosphingobium aromaticivorans (strain ATCC 700278 / DSM 12444 / CCUG 56034 / CIP 105152 / NBRC 16084 / F199).